Reading from the N-terminus, the 244-residue chain is UDP-2,3-diacylglucosamine hydrolase (244 aa).

5 residues coordinate Mn(2+): D8, H10, D41, N79, and H114. Substrate is bound at residue 79–80; it reads NR. Residues D122, S160, N164, K167, and H195 each contribute to the substrate site. H195 and H197 together coordinate Mn(2+).

It belongs to the LpxH family. Mn(2+) is required as a cofactor.

It localises to the cell inner membrane. The enzyme catalyses UDP-2-N,3-O-bis[(3R)-3-hydroxytetradecanoyl]-alpha-D-glucosamine + H2O = 2-N,3-O-bis[(3R)-3-hydroxytetradecanoyl]-alpha-D-glucosaminyl 1-phosphate + UMP + 2 H(+). The protein operates within glycolipid biosynthesis; lipid IV(A) biosynthesis; lipid IV(A) from (3R)-3-hydroxytetradecanoyl-[acyl-carrier-protein] and UDP-N-acetyl-alpha-D-glucosamine: step 4/6. In terms of biological role, hydrolyzes the pyrophosphate bond of UDP-2,3-diacylglucosamine to yield 2,3-diacylglucosamine 1-phosphate (lipid X) and UMP by catalyzing the attack of water at the alpha-P atom. Involved in the biosynthesis of lipid A, a phosphorylated glycolipid that anchors the lipopolysaccharide to the outer membrane of the cell. This is UDP-2,3-diacylglucosamine hydrolase from Hahella chejuensis (strain KCTC 2396).